A 509-amino-acid polypeptide reads, in one-letter code: Putative aldehyde dehydrogenase family 7 member A1 homolog (509 aa).

An NAD(+)-binding site is contributed by 244–249 (GSTEVG). Glu266 (proton acceptor) is an active-site residue. The active-site Nucleophile is the Cys300.

Belongs to the aldehyde dehydrogenase family. In terms of assembly, homotetramer.

It catalyses the reaction an aldehyde + NAD(+) + H2O = a carboxylate + NADH + 2 H(+). This Dictyostelium discoideum (Social amoeba) protein is Putative aldehyde dehydrogenase family 7 member A1 homolog.